We begin with the raw amino-acid sequence, 319 residues long: Ferrochelatase (319 aa).

Positions 194 and 275 each coordinate Fe cation.

This sequence belongs to the ferrochelatase family.

Its subcellular location is the cytoplasm. It catalyses the reaction heme b + 2 H(+) = protoporphyrin IX + Fe(2+). It participates in porphyrin-containing compound metabolism; protoheme biosynthesis; protoheme from protoporphyrin-IX: step 1/1. Catalyzes the ferrous insertion into protoporphyrin IX. The polypeptide is Ferrochelatase (Hamiltonella defensa subsp. Acyrthosiphon pisum (strain 5AT)).